The sequence spans 168 residues: S-ribosylhomocysteine lyase (168 aa).

Residues His-54, His-58, and Cys-128 each contribute to the Fe cation site.

This sequence belongs to the LuxS family. As to quaternary structure, homodimer. Fe cation is required as a cofactor.

The enzyme catalyses S-(5-deoxy-D-ribos-5-yl)-L-homocysteine = (S)-4,5-dihydroxypentane-2,3-dione + L-homocysteine. Functionally, involved in the synthesis of autoinducer 2 (AI-2) which is secreted by bacteria and is used to communicate both the cell density and the metabolic potential of the environment. The regulation of gene expression in response to changes in cell density is called quorum sensing. Catalyzes the transformation of S-ribosylhomocysteine (RHC) to homocysteine (HC) and 4,5-dihydroxy-2,3-pentadione (DPD). The chain is S-ribosylhomocysteine lyase from Neisseria meningitidis serogroup C (strain 053442).